The chain runs to 238 residues: 1-(5-phosphoribosyl)-5-[(5-phosphoribosylamino)methylideneamino] imidazole-4-carboxamide isomerase (238 aa).

The active-site Proton acceptor is the D8. The active-site Proton donor is D129.

This sequence belongs to the HisA/HisF family.

The protein localises to the cytoplasm. The catalysed reaction is 1-(5-phospho-beta-D-ribosyl)-5-[(5-phospho-beta-D-ribosylamino)methylideneamino]imidazole-4-carboxamide = 5-[(5-phospho-1-deoxy-D-ribulos-1-ylimino)methylamino]-1-(5-phospho-beta-D-ribosyl)imidazole-4-carboxamide. It functions in the pathway amino-acid biosynthesis; L-histidine biosynthesis; L-histidine from 5-phospho-alpha-D-ribose 1-diphosphate: step 4/9. The sequence is that of 1-(5-phosphoribosyl)-5-[(5-phosphoribosylamino)methylideneamino] imidazole-4-carboxamide isomerase from Lacticaseibacillus casei (strain BL23) (Lactobacillus casei).